An 838-amino-acid chain; its full sequence is G-protein coupled receptor-associated sorting protein 2 (838 aa).

Disordered regions lie at residues 1-121, 218-293, and 531-552; these read MTGA…PGAR, ASNE…NPFS, and LELS…PSPE. A compositionally biased stretch (basic and acidic residues) spans 13 to 31; that stretch reads KPEKKAGEEVVAGPEREND. Residues 220 to 235 show a composition bias toward polar residues; it reads NESGFWSADETSTASS. Positions 255–271 are enriched in basic residues; the sequence is RSRHRAKHQTNPRSRPR. Ser282 and Ser284 each carry phosphoserine. Polar residues predominate over residues 542-552; that stretch reads SLLQPDQPSPE.

Belongs to the GPRASP family. Interacts with cytoplasmic tails of a variety of G protein-coupled receptors such as muscarinic acetylcholine receptor M1/CHRM1 and calcitonin receptor/CALCR.

May play a role in regulation of a variety of G-protein coupled receptors. The polypeptide is G-protein coupled receptor-associated sorting protein 2 (GPRASP2) (Pongo abelii (Sumatran orangutan)).